A 204-amino-acid polypeptide reads, in one-letter code: Photosystem I reaction center subunit II-2, chloroplastic (204 aa).

A chloroplast-targeting transit peptide spans 1–44; that stretch reads MATQAAGIFSPAITTTTSAVKKLHLFSSSHRPKSLSFTKTAIRA. Phosphothreonine is present on threonine 47. Residues 47-71 are disordered; it reads TESSSAAPAVKEAPVGFTPPQLDPN. The interval 137-145 is ferredoxin and ferredoxin-oxidoreductase binding; it reads RLRSKYKIT.

It belongs to the PsaD family. Interacts with CURT1C.

The protein resides in the plastid. It is found in the chloroplast thylakoid membrane. Functionally, PSAD can form complexes with ferredoxin and ferredoxin-oxidoreductase in photosystem I (PS I) reaction center. PSAD may encode the ferredoxin-docking protein. The sequence is that of Photosystem I reaction center subunit II-2, chloroplastic (PSAD2) from Arabidopsis thaliana (Mouse-ear cress).